The primary structure comprises 467 residues: MSIGNIVQCIGAVVDIEFPRDAMPKVYDALVLEDSGDASFAEKGLTFEVQQQLGDGVVRTIALGSSDGLRRGMEVKSTGAPISVPVGHGTLGRIMDVLGRPIDEAGPIASDELRAIHQKAPKFDELSPSVDLLETGIKVIDLVCPFAKGGKVGLFGGAGVGKTVNMMELINNIAKQHSGLSVFAGVGERTREGNDFYHEMKDSNVLDKVAMVFGQMNEPPGNRLRVALTGLTMAERFRDEGRDILFFVDNIYRYTLAGTEVSALLGRMPSAVGYQPTLAEEMGKLQERITSTKTGSITSIQAVYVPADDLTDPSPATTFLHLDSTVVLSRDIAALGIYPAVDPLDSTSRQLDPQVVGTEHYEVARRVQQTLQRYKELRDIIAILGMDELSPEDKLAVNRARKIQRFLSQPFHVAEVFTGSPGKYVPLKETIRGFKMLVDGECDHLPEQAFYMVGSIDEAFEKAKKLQ.

156–163 (GGAGVGKT) contributes to the ATP binding site.

Belongs to the ATPase alpha/beta chains family. F-type ATPases have 2 components, CF(1) - the catalytic core - and CF(0) - the membrane proton channel. CF(1) has five subunits: alpha(3), beta(3), gamma(1), delta(1), epsilon(1). CF(0) has three main subunits: a(1), b(2) and c(9-12). The alpha and beta chains form an alternating ring which encloses part of the gamma chain. CF(1) is attached to CF(0) by a central stalk formed by the gamma and epsilon chains, while a peripheral stalk is formed by the delta and b chains.

The protein localises to the cell inner membrane. It carries out the reaction ATP + H2O + 4 H(+)(in) = ADP + phosphate + 5 H(+)(out). In terms of biological role, produces ATP from ADP in the presence of a proton gradient across the membrane. The catalytic sites are hosted primarily by the beta subunits. The polypeptide is ATP synthase subunit beta (Cupriavidus necator (strain ATCC 17699 / DSM 428 / KCTC 22496 / NCIMB 10442 / H16 / Stanier 337) (Ralstonia eutropha)).